The following is a 1384-amino-acid chain: ABC transporter C family member 2 (1384 aa).

One can recognise an ABC transmembrane type-1 1 domain in the interval 104–388 (NKISVATKIF…LPEAIHRALS (285 aa)). A run of 5 helical transmembrane segments spans residues 112–132 (IFVAIVSILSPLCLKYFIYYI), 140–160 (TFKFGFLLCVLLFLSSLSLTL), 226–246 (IFVFPFQILALLILLCWIVGL), 247–267 (SGLVGFGVMVVSIPLCTFLST), and 333–353 (MITQVTSALVLVATFSTYALT). One can recognise an ABC transporter 1 domain in the interval 505–724 (IEYDGAVQPS…GIDFESIMKT (220 aa)). ATP is bound at residue 537-544 (GIVGSGKT). Positions 729–756 (IDENDQSSTSTTDKKSSTSSSSSELKKS) are disordered. Residues 735–756 (SSTSTTDKKSSTSSSSSELKKS) are compositionally biased toward low complexity. A run of 5 helical transmembrane segments spans residues 813 to 833 (LFFLTCALYFISQIIFQLSDF), 852 to 872 (ILYYCIFIGAFIVFLVVRYFM), 941 to 961 (LFMMIYITPLISIPFAILVVV), 1036 to 1056 (GIRLEFITALIVFFTAFSSLF), and 1061 to 1081 (GFSVLAVTTALGICSYLNWTI). An ABC transmembrane type-1 2 domain is found at 814–1093 (FFLTCALYFI…MTELEVKMNS (280 aa)). The ABC transporter 2 domain occupies 1137-1371 (VEFKNVEIKY…EGSRFKKLVK (235 aa)). An ATP-binding site is contributed by 1171 to 1178 (GRTGAGKS).

It belongs to the ABC transporter superfamily. ABCC family. Conjugate transporter (TC 3.A.1.208) subfamily.

The protein resides in the membrane. This Dictyostelium discoideum (Social amoeba) protein is ABC transporter C family member 2 (abcC2).